Here is a 419-residue protein sequence, read N- to C-terminus: L-rhamnose isomerase (419 aa).

Residues H262, D294, and D296 each contribute to the Mn(2+) site.

This sequence belongs to the rhamnose isomerase family. Homotetramer. Requires Mn(2+) as cofactor.

The protein localises to the cytoplasm. The catalysed reaction is L-rhamnopyranose = L-rhamnulose. The protein operates within carbohydrate degradation; L-rhamnose degradation; glycerone phosphate from L-rhamnose: step 1/3. Its function is as follows. Catalyzes the interconversion of L-rhamnose and L-rhamnulose. This is L-rhamnose isomerase from Escherichia coli O6:H1 (strain CFT073 / ATCC 700928 / UPEC).